A 520-amino-acid polypeptide reads, in one-letter code: 2-isopropylmalate synthase (520 aa).

In terms of domain architecture, Pyruvate carboxyltransferase spans 12-274 (VVIFDTTLRD…WCNVESTMLT (263 aa)). Mn(2+) contacts are provided by D21, H209, H211, and N245. Residues 398 to 520 (KLTSLTVIAG…RDVPSAAAAS (123 aa)) are regulatory domain.

This sequence belongs to the alpha-IPM synthase/homocitrate synthase family. LeuA type 1 subfamily. As to quaternary structure, homodimer. The cofactor is Mn(2+).

It localises to the cytoplasm. The catalysed reaction is 3-methyl-2-oxobutanoate + acetyl-CoA + H2O = (2S)-2-isopropylmalate + CoA + H(+). The protein operates within amino-acid biosynthesis; L-leucine biosynthesis; L-leucine from 3-methyl-2-oxobutanoate: step 1/4. Catalyzes the condensation of the acetyl group of acetyl-CoA with 3-methyl-2-oxobutanoate (2-ketoisovalerate) to form 3-carboxy-3-hydroxy-4-methylpentanoate (2-isopropylmalate). This Nitrobacter hamburgensis (strain DSM 10229 / NCIMB 13809 / X14) protein is 2-isopropylmalate synthase.